We begin with the raw amino-acid sequence, 431 residues long: Adenylosuccinate synthetase (431 aa).

Residues 12 to 18 and 40 to 42 contribute to the GTP site; these read GDEGKGK and GHT. Catalysis depends on Asp13, which acts as the Proton acceptor. Residues Asp13 and Gly40 each coordinate Mg(2+). IMP-binding positions include 13-16, 38-41, Thr131, Arg145, Gln225, Thr240, and Arg304; these read DEGK and NAGH. The active-site Proton donor is the His41. Residue 300-306 coordinates substrate; sequence VNTGRRR. Residues Arg306, 332 to 334, and 414 to 416 each bind GTP; these read KLD and STS.

The protein belongs to the adenylosuccinate synthetase family. As to quaternary structure, homodimer. Mg(2+) is required as a cofactor.

It is found in the cytoplasm. The enzyme catalyses IMP + L-aspartate + GTP = N(6)-(1,2-dicarboxyethyl)-AMP + GDP + phosphate + 2 H(+). It participates in purine metabolism; AMP biosynthesis via de novo pathway; AMP from IMP: step 1/2. Functionally, plays an important role in the de novo pathway of purine nucleotide biosynthesis. Catalyzes the first committed step in the biosynthesis of AMP from IMP. This Beijerinckia indica subsp. indica (strain ATCC 9039 / DSM 1715 / NCIMB 8712) protein is Adenylosuccinate synthetase.